Reading from the N-terminus, the 462-residue chain is Golgi-associated PDZ and coiled-coil motif-containing protein (462 aa).

Positions 83-194 (KAQSVSQINH…EDEALRGHIA (112 aa)) form a coiled coil. Positions 288–371 (KVLLLKEDHE…EIEFEVVYVA (84 aa)) constitute a PDZ domain. The segment at 427–449 (TDTHENGDLGTASETPLDDGASK) is disordered.

Homooligomer. Interacts with FZD5. Interacts with FZD8. Interacts with GRID2 and BECN1. Interacts with CSPG5. Interacts with CLCN3. Interacts with STX6. Interacts with CFTR. Interacts with ASIC3. Interacts with GOLGA3. Interacts with NLGN1. Interacts with RHOQ. Interacts with MARCHF2; the interaction leads to CFTR ubiquitination and degradation. May interact with CACNG2. Interacts with CCDC62.

Its subcellular location is the cytoplasm. It localises to the golgi apparatus membrane. The protein localises to the golgi apparatus. The protein resides in the trans-Golgi network membrane. It is found in the synapse. Its subcellular location is the postsynaptic density. It localises to the cell projection. The protein localises to the dendrite. Its function is as follows. Plays a role in intracellular protein trafficking and degradation. May regulate CFTR chloride currents and acid-induced ASIC3 currents by modulating cell surface expression of both channels. May also regulate the intracellular trafficking of the ADR1B receptor. May play a role in autophagy. Together with MARCHF2 mediates the ubiquitination and lysosomal degradation of CFTR. Overexpression results in CFTR intracellular retention and degradation in the lysosomes. The protein is Golgi-associated PDZ and coiled-coil motif-containing protein (GOPC) of Pongo abelii (Sumatran orangutan).